Here is a 65-residue protein sequence, read N- to C-terminus: U15-hexatoxin-Mg1b (65 aa).

In terms of processing, contains 4 disulfide bonds. In terms of tissue distribution, expressed by the venom gland.

Its subcellular location is the secreted. Functionally, in vivo, intrathorax injection into crickets causes death. The chain is U15-hexatoxin-Mg1b from Macrothele gigas (Japanese funnel web spider).